Consider the following 90-residue polypeptide: Cluster 41 protein AFLA_114800 (90 aa).

The chain crosses the membrane as a helical span at residues 55–77 (GLLLLCCFYPIGNLILLVRLSLV). A glycan (N-linked (GlcNAc...) asparagine) is linked at Asn80.

It is found in the membrane. Cluster 41 protein; part of the gene cluster 41 that mediates the biosynthesis of an extracellular and diffusible metabolite that is able to stimulate colony sclerotial production. The protein is Cluster 41 protein AFLA_114800 of Aspergillus flavus (strain ATCC 200026 / FGSC A1120 / IAM 13836 / NRRL 3357 / JCM 12722 / SRRC 167).